The sequence spans 344 residues: 2,3,4,5-tetrahydropyridine-2,6-dicarboxylate N-succinyltransferase (344 aa).

Glutamate 205 contributes to the Mg(2+) binding site. Glutamate 221 serves as the catalytic Acyl-anhydride intermediate. Residues arginine 223, glycine 238, serine 241, alanine 264, 279-280, 287-289, lysine 304, and 317-320 contribute to the succinyl-CoA site; these read EA, GTK, and RRNS.

This sequence belongs to the type 2 tetrahydrodipicolinate N-succinyltransferase family. Homotrimer. Requires Magnesium ions are not essential for catalysis. as cofactor.

It is found in the cytoplasm. The enzyme catalyses (S)-2,3,4,5-tetrahydrodipicolinate + succinyl-CoA + H2O = (S)-2-succinylamino-6-oxoheptanedioate + CoA. It participates in amino-acid biosynthesis; L-lysine biosynthesis via DAP pathway; LL-2,6-diaminopimelate from (S)-tetrahydrodipicolinate (succinylase route): step 1/3. With respect to regulation, weakly inhibited by D-2-aminopimelate. In terms of biological role, catalyzes the conversion of the cyclic tetrahydrodipicolinate (THDP) into the acyclic N-succinyl-L-2-amino-6-oxopimelate using succinyl-CoA. Displays succinyl transferase activity with L-2-aminopimelate and succinyl-CoA as substrates. This Pseudomonas aeruginosa (strain ATCC 15692 / DSM 22644 / CIP 104116 / JCM 14847 / LMG 12228 / 1C / PRS 101 / PAO1) protein is 2,3,4,5-tetrahydropyridine-2,6-dicarboxylate N-succinyltransferase.